A 197-amino-acid polypeptide reads, in one-letter code: Protein SPMIP2 (197 aa).

The interval 161–197 (SKAALPIGSRPPKLPKLPKKEEKSKFRPLHQHDARCY) is disordered. Basic and acidic residues predominate over residues 178-197 (PKKEEKSKFRPLHQHDARCY).

The polypeptide is Protein SPMIP2 (SPMIP2) (Bos taurus (Bovine)).